The sequence spans 209 residues: Probable L-serine dehydratase, alpha chain (209 aa).

The protein belongs to the iron-sulfur dependent L-serine dehydratase family. As to quaternary structure, heterodimer of an alpha chain and a beta chain. [4Fe-4S] cluster is required as a cofactor.

It catalyses the reaction L-serine = pyruvate + NH4(+). It participates in carbohydrate biosynthesis; gluconeogenesis. The sequence is that of Probable L-serine dehydratase, alpha chain (sdhA) from Latilactobacillus sakei (Lactobacillus sakei).